We begin with the raw amino-acid sequence, 301 residues long: tRNA uridine(34) hydroxylase (301 aa).

A Rhodanese domain is found at 121 to 215 (RSDDVVLIDT…YLEEVPAENS (95 aa)). Catalysis depends on C175, which acts as the Cysteine persulfide intermediate.

Belongs to the TrhO family.

It catalyses the reaction uridine(34) in tRNA + AH2 + O2 = 5-hydroxyuridine(34) in tRNA + A + H2O. Its function is as follows. Catalyzes oxygen-dependent 5-hydroxyuridine (ho5U) modification at position 34 in tRNAs. In Ruegeria pomeroyi (strain ATCC 700808 / DSM 15171 / DSS-3) (Silicibacter pomeroyi), this protein is tRNA uridine(34) hydroxylase.